A 631-amino-acid chain; its full sequence is Protein FRIABLE 1 (631 aa).

A compositionally biased stretch (low complexity) spans 1–13 (MSVGVPVNPSSSS). The tract at residues 1 to 36 (MSVGVPVNPSSSSQLPAAPTTTTRRRVADSQEDHSH) is disordered. Topologically, residues 1 to 120 (MSVGVPVNPS…NMRSTTNLGR (120 aa)) are cytoplasmic. The span at 26–36 (RVADSQEDHSH) shows a compositional bias: basic and acidic residues. Residues 121–141 (FILTLLSILVVTFFLIVALSG) form a helical; Signal-anchor for type II membrane protein membrane-spanning segment. The Lumenal portion of the chain corresponds to 142–631 (GVGRRRKHVE…RPSLRAQSLR (490 aa)). Asn246, Asn329, and Asn364 each carry an N-linked (GlcNAc...) asparagine glycan. 384 to 386 (HLR) is a substrate binding site. N-linked (GlcNAc...) asparagine glycans are attached at residues Asn398 and Asn425.

This sequence belongs to the glycosyltransferase GT106 family. As to expression, ubiquitous. Strong expression in young seedlings, particularly at the junction between hypocotyl and root, in emerging cotyledons, and in parts of the roots. Also detected in the inflorescence (sepals, petals, mature pollen and siliques) and rosette leaves.

The protein resides in the golgi apparatus membrane. The protein operates within glycan metabolism. Glycosyltransferase required for normal cell adhesion and cell wall integrity. This Arabidopsis thaliana (Mouse-ear cress) protein is Protein FRIABLE 1.